Consider the following 88-residue polypeptide: Cell division topological specificity factor (88 aa).

This sequence belongs to the MinE family.

Prevents the cell division inhibition by proteins MinC and MinD at internal division sites while permitting inhibition at polar sites. This ensures cell division at the proper site by restricting the formation of a division septum at the midpoint of the long axis of the cell. This Pseudoalteromonas translucida (strain TAC 125) protein is Cell division topological specificity factor.